A 302-amino-acid polypeptide reads, in one-letter code: Acetaldehyde dehydrogenase 1 (302 aa).

12 to 15 is an NAD(+) binding site; sequence SGNI. Catalysis depends on Cys127, which acts as the Acyl-thioester intermediate. NAD(+)-binding positions include 158–166 and Asn277; that span reads SAGPGTRAN.

Belongs to the acetaldehyde dehydrogenase family.

It catalyses the reaction acetaldehyde + NAD(+) + CoA = acetyl-CoA + NADH + H(+). In Mycobacteroides abscessus (strain ATCC 19977 / DSM 44196 / CCUG 20993 / CIP 104536 / JCM 13569 / NCTC 13031 / TMC 1543 / L948) (Mycobacterium abscessus), this protein is Acetaldehyde dehydrogenase 1.